The chain runs to 166 residues: MNRTALYAGSFDPVTNGHVDVIRQACRLVGRLVIAIGVHPGKTPLFSAEERAELIRATCDPIAAAEGSALEVVTFDDLAVSAARRAGASLFIRGLRDGTDLDYEMQLAGMNSAMAPEVQTVFLPASTGVRPITATLVRQIAAMGGDVRPFVPELVAERLEARFAKP.

Ser10 lines the substrate pocket. ATP contacts are provided by residues Ser10 to Phe11 and His18. 3 residues coordinate substrate: Lys42, Ala79, and Arg93. ATP is bound by residues Gly94–Arg96, Glu104, and Val129–Thr135.

This sequence belongs to the bacterial CoaD family. Homohexamer. Requires Mg(2+) as cofactor.

Its subcellular location is the cytoplasm. It catalyses the reaction (R)-4'-phosphopantetheine + ATP + H(+) = 3'-dephospho-CoA + diphosphate. It functions in the pathway cofactor biosynthesis; coenzyme A biosynthesis; CoA from (R)-pantothenate: step 4/5. Reversibly transfers an adenylyl group from ATP to 4'-phosphopantetheine, yielding dephospho-CoA (dPCoA) and pyrophosphate. The polypeptide is Phosphopantetheine adenylyltransferase (Methylobacterium nodulans (strain LMG 21967 / CNCM I-2342 / ORS 2060)).